Reading from the N-terminus, the 434-residue chain is Methylenetetrahydrofolate--tRNA-(uracil-5-)-methyltransferase TrmFO (434 aa).

10 to 15 provides a ligand contact to FAD; the sequence is GAGLAG.

It belongs to the MnmG family. TrmFO subfamily. FAD serves as cofactor.

It localises to the cytoplasm. It catalyses the reaction uridine(54) in tRNA + (6R)-5,10-methylene-5,6,7,8-tetrahydrofolate + NADH + H(+) = 5-methyluridine(54) in tRNA + (6S)-5,6,7,8-tetrahydrofolate + NAD(+). The enzyme catalyses uridine(54) in tRNA + (6R)-5,10-methylene-5,6,7,8-tetrahydrofolate + NADPH + H(+) = 5-methyluridine(54) in tRNA + (6S)-5,6,7,8-tetrahydrofolate + NADP(+). In terms of biological role, catalyzes the folate-dependent formation of 5-methyl-uridine at position 54 (M-5-U54) in all tRNAs. The sequence is that of Methylenetetrahydrofolate--tRNA-(uracil-5-)-methyltransferase TrmFO from Bacillus cereus (strain ATCC 14579 / DSM 31 / CCUG 7414 / JCM 2152 / NBRC 15305 / NCIMB 9373 / NCTC 2599 / NRRL B-3711).